The primary structure comprises 256 residues: uncharacterized protein (256 aa).

Residues 1-24 form the signal peptide; sequence MIKRVNKLVLGISLLFLVISITAG. Cysteine 25 carries N-palmitoyl cysteine lipidation. Cysteine 25 carries the S-diacylglycerol cysteine lipid modification.

It belongs to the staphylococcal tandem lipoprotein family.

It is found in the cell membrane. This is an uncharacterized protein from Staphylococcus aureus (strain MW2).